The chain runs to 375 residues: Citrate synthase (375 aa).

Catalysis depends on residues H266 and D317.

It belongs to the citrate synthase family. Homohexamer.

The enzyme catalyses oxaloacetate + acetyl-CoA + H2O = citrate + CoA + H(+). The protein operates within carbohydrate metabolism; tricarboxylic acid cycle; isocitrate from oxaloacetate: step 1/2. Its activity is regulated as follows. Allosterically inhibited by NADH. The protein is Citrate synthase (gltA) of Mycolicibacterium smegmatis (Mycobacterium smegmatis).